A 367-amino-acid polypeptide reads, in one-letter code: Histidinol-phosphate aminotransferase (367 aa).

At K225 the chain carries N6-(pyridoxal phosphate)lysine.

It belongs to the class-II pyridoxal-phosphate-dependent aminotransferase family. Histidinol-phosphate aminotransferase subfamily. Homodimer. Pyridoxal 5'-phosphate is required as a cofactor.

The catalysed reaction is L-histidinol phosphate + 2-oxoglutarate = 3-(imidazol-4-yl)-2-oxopropyl phosphate + L-glutamate. It participates in amino-acid biosynthesis; L-histidine biosynthesis; L-histidine from 5-phospho-alpha-D-ribose 1-diphosphate: step 7/9. This chain is Histidinol-phosphate aminotransferase, found in Hyphomonas neptunium (strain ATCC 15444).